We begin with the raw amino-acid sequence, 752 residues long: DNA ligase (752 aa).

The segment at Met1–Ala25 is disordered. NAD(+) contacts are provided by residues Asp91–Asp95, Ser140–Leu141, and Glu170. Lys172 functions as the N6-AMP-lysine intermediate in the catalytic mechanism. NAD(+) is bound by residues Arg193, Glu233, Lys350, and Lys374. Positions 474, 477, 493, and 499 each coordinate Zn(2+). One can recognise a BRCT domain in the interval Ser669–Leu752.

This sequence belongs to the NAD-dependent DNA ligase family. LigA subfamily. Mg(2+) serves as cofactor. Mn(2+) is required as a cofactor.

The enzyme catalyses NAD(+) + (deoxyribonucleotide)n-3'-hydroxyl + 5'-phospho-(deoxyribonucleotide)m = (deoxyribonucleotide)n+m + AMP + beta-nicotinamide D-nucleotide.. Functionally, DNA ligase that catalyzes the formation of phosphodiester linkages between 5'-phosphoryl and 3'-hydroxyl groups in double-stranded DNA using NAD as a coenzyme and as the energy source for the reaction. It is essential for DNA replication and repair of damaged DNA. In Nocardioides sp. (strain ATCC BAA-499 / JS614), this protein is DNA ligase.